An 86-amino-acid chain; its full sequence is Small ribosomal subunit protein bS16 (86 aa).

The protein belongs to the bacterial ribosomal protein bS16 family.

This is Small ribosomal subunit protein bS16 from Xylella fastidiosa (strain M23).